The sequence spans 475 residues: Glutamyl-tRNA(Gln) amidotransferase subunit A (475 aa).

Active-site charge relay system residues include Lys76 and Ser151. Residue Ser175 is the Acyl-ester intermediate of the active site.

Belongs to the amidase family. GatA subfamily. Heterotrimer of A, B and C subunits.

It catalyses the reaction L-glutamyl-tRNA(Gln) + L-glutamine + ATP + H2O = L-glutaminyl-tRNA(Gln) + L-glutamate + ADP + phosphate + H(+). Functionally, allows the formation of correctly charged Gln-tRNA(Gln) through the transamidation of misacylated Glu-tRNA(Gln) in organisms which lack glutaminyl-tRNA synthetase. The reaction takes place in the presence of glutamine and ATP through an activated gamma-phospho-Glu-tRNA(Gln). The chain is Glutamyl-tRNA(Gln) amidotransferase subunit A from Pelodictyon phaeoclathratiforme (strain DSM 5477 / BU-1).